A 787-amino-acid polypeptide reads, in one-letter code: Protocadherin beta-15 (787 aa).

An N-terminal signal peptide occupies residues 1 to 26; it reads MEPAGERFPEQRQVLILLLLLEVTLA. Residues 27–690 are Extracellular-facing; it reads GWEPRRYSVM…AQADSLTVYL (664 aa). 5 Cadherin domains span residues 35-133, 138-242, 247-347, 352-451, and 456-561; these read VMEE…SPEF, ITLK…APEF, YEVQ…FPEL, LTSP…APAF, and YTLF…SPFV. N-linked (GlcNAc...) asparagine glycosylation is found at asparagine 418 and asparagine 436. Asparagine 567 is a glycosylation site (N-linked (GlcNAc...) asparagine). A Cadherin 6 domain is found at 568-671; sequence GSAPCTELVP…LVDGFSQPYL (104 aa). The helical transmembrane segment at 691–711 threads the bilayer; that stretch reads VVALASVSSLFLFSVLLFVAV. At 712 to 787 the chain is on the cytoplasmic side; that stretch reads RLCRRSRAAS…DSRRKSEFLE (76 aa).

It is found in the cell membrane. Its function is as follows. Potential calcium-dependent cell-adhesion protein. May be involved in the establishment and maintenance of specific neuronal connections in the brain. The sequence is that of Protocadherin beta-15 (PCDHB15) from Pan troglodytes (Chimpanzee).